Consider the following 364-residue polypeptide: Ribosomal RNA large subunit methyltransferase F (364 aa).

The interval 1-30 is disordered; that stretch reads MTNKRKSAKPLEPAKRAPKPRTKKSRDLSA.

It belongs to the methyltransferase superfamily. METTL16/RlmF family.

Its subcellular location is the cytoplasm. It carries out the reaction adenosine(1618) in 23S rRNA + S-adenosyl-L-methionine = N(6)-methyladenosine(1618) in 23S rRNA + S-adenosyl-L-homocysteine + H(+). Functionally, specifically methylates the adenine in position 1618 of 23S rRNA. The polypeptide is Ribosomal RNA large subunit methyltransferase F (Vibrio vulnificus (strain CMCP6)).